We begin with the raw amino-acid sequence, 545 residues long: Glucans biosynthesis protein G (545 aa).

The first 35 residues, 1 to 35 (MIRVSSAVQRHAQKLIVLFSLLFGASLLMSDNGFA), serve as a signal peptide directing secretion.

This sequence belongs to the OpgD/OpgG family.

Its subcellular location is the periplasm. Its pathway is glycan metabolism; osmoregulated periplasmic glucan (OPG) biosynthesis. Functionally, involved in the biosynthesis of osmoregulated periplasmic glucans (OPGs). This Vibrio cholerae serotype O1 (strain ATCC 39541 / Classical Ogawa 395 / O395) protein is Glucans biosynthesis protein G.